We begin with the raw amino-acid sequence, 240 residues long: Expansin-A20 (240 aa).

The signal sequence occupies residues 1 to 21 (MGNILLQLLAVVALCIAPARS). Residues 41-145 (GGACGYGNLY…QQVKCWRYGG (105 aa)) form the Expansin-like EG45 domain. N-linked (GlcNAc...) asparagine glycosylation is found at asparagine 107 and asparagine 207. An Expansin-like CBD domain is found at 155-234 (YFELVLVTNM…GWSFGQTFST (80 aa)).

This sequence belongs to the expansin family. Expansin A subfamily.

The protein resides in the secreted. It is found in the cell wall. The protein localises to the membrane. May cause loosening and extension of plant cell walls by disrupting non-covalent bonding between cellulose microfibrils and matrix glucans. No enzymatic activity has been found. May be required for rapid internodal elongation in deepwater rice during submergence. This chain is Expansin-A20 (EXPA20), found in Oryza sativa subsp. japonica (Rice).